Consider the following 466-residue polypeptide: MPFNHNSKAKRPKFLLDLQIKELVNIPQSSGYCYTKWRLKDGTGTSGHKVALDGEHQTTSTQSRGTTKHVHVQHHRAQWNYSLDKPILVKLHLDKNGRFLKKILVLDVFFEFADANSSLTSSSSPNGKVKKTTYANATALTATGNNSYSQKITGKLLLGTVDIDITEYVKEDETPTTNRFLLKHSKVNSIINVSLQLKLVRGSYEDFNISKSFTNGQLANYRPGINTILDNTSELSSPTSTTNQMSPKNTFSNFNGIGTTVAKPGTNATGNSTSIKSPTSTNHKSSEMTTKPGLSTTISSSMSPLIESLYQKTFKLPWDPRPGEFTPRECVEDILQGGNGWAKNEKGINLIDLQALRLNEMEEEYYNPNYGNNLGNKASSWPPNPSDDGYSTMGKREYLEKKQNWSHMSRAQRAKLRTHNDEDNENTANDKGSDKDNNSVEDNNPTDFLTDRIRENKNWSIITPSG.

The region spanning 4-199 (NHNSKAKRPK…IINVSLQLKL (196 aa)) is the C2 NT-type domain. Disordered regions lie at residues 262-298 (AKPG…STTI), 374-393 (LGNK…YSTM), and 400-452 (EKKQ…LTDR). Residues 266 to 298 (TNATGNSTSIKSPTSTNHKSSEMTTKPGLSTTI) show a composition bias toward polar residues. Phosphoserine occurs at positions 433 and 439.

It to S.pombe SpCC1494.08c.

This is an uncharacterized protein from Saccharomyces cerevisiae (strain ATCC 204508 / S288c) (Baker's yeast).